Consider the following 143-residue polypeptide: Nuclear transcription factor Y subunit B-4 (143 aa).

Residues 1 to 23 are disordered; the sequence is MSEGFDGTENGGGGGGGGVGKEQ. Gly residues predominate over residues 9–20; that stretch reads ENGGGGGGGGVG. Residues 27–33 mediate DNA binding; sequence LPIANIG. Residues 54–65 are subunit association domain (SAD); it reads VQECVSEFISFI. Over residues 117–130 the composition is skewed to basic and acidic residues; the sequence is KGSRASELPVKKDV. Residues 117–143 form a disordered region; sequence KGSRASELPVKKDVVLNGDPGSSFEGM.

The protein belongs to the NFYB/HAP3 subunit family. As to quaternary structure, heterotrimeric transcription factor composed of three components, NF-YA, NF-YB and NF-YC. NF-YB and NF-YC must interact and dimerize for NF-YA association and DNA binding. In terms of tissue distribution, ubiquitous.

The protein resides in the nucleus. Component of the NF-Y/HAP transcription factor complex. The NF-Y complex stimulates the transcription of various genes by recognizing and binding to a CCAAT motif in promoters. May regulate the expression of photosynthetic genes, and may be involved in chloroplast and amyloplast development. This Oryza sativa subsp. japonica (Rice) protein is Nuclear transcription factor Y subunit B-4 (NFYB4).